Consider the following 217-residue polypeptide: Protein-L-isoaspartate O-methyltransferase (217 aa).

The active site involves Ser67.

Belongs to the methyltransferase superfamily. L-isoaspartyl/D-aspartyl protein methyltransferase family.

Its subcellular location is the cytoplasm. It carries out the reaction [protein]-L-isoaspartate + S-adenosyl-L-methionine = [protein]-L-isoaspartate alpha-methyl ester + S-adenosyl-L-homocysteine. Its function is as follows. Catalyzes the methyl esterification of L-isoaspartyl residues in peptides and proteins that result from spontaneous decomposition of normal L-aspartyl and L-asparaginyl residues. It plays a role in the repair and/or degradation of damaged proteins. In Azoarcus sp. (strain BH72), this protein is Protein-L-isoaspartate O-methyltransferase.